Consider the following 360-residue polypeptide: mRNA cap guanine-N(7) methyltransferase (360 aa).

A disordered region spans residues 1 to 62; that stretch reads MSSSNSRVHE…NRHENNGNAQ (62 aa). A compositionally biased stretch (basic and acidic residues) spans 7–19; the sequence is RVHEEQPPTENRR. The mRNA cap 0 methyltransferase domain occupies 83–358; the sequence is SPIIQLKRFN…FYLAFAFEKR (276 aa). 92-93 lines the mRNA pocket; it reads NN. Residues Lys96, Gly118, Asp140, Asp168, Gln191, and Tyr196 each coordinate S-adenosyl-L-methionine.

This sequence belongs to the class I-like SAM-binding methyltransferase superfamily. mRNA cap 0 methyltransferase family. As to quaternary structure, interacts with cdk9.

It is found in the nucleus. The catalysed reaction is a 5'-end (5'-triphosphoguanosine)-ribonucleoside in mRNA + S-adenosyl-L-methionine = a 5'-end (N(7)-methyl 5'-triphosphoguanosine)-ribonucleoside in mRNA + S-adenosyl-L-homocysteine. Functionally, responsible for methylating the 5'-cap structure of mRNAs. This is mRNA cap guanine-N(7) methyltransferase (pcm1) from Schizosaccharomyces pombe (strain 972 / ATCC 24843) (Fission yeast).